A 418-amino-acid chain; its full sequence is BTB and MATH domain-containing protein 41 (418 aa).

The interval methionine 1–isoleucine 33 is disordered. The region spanning serine 45–leucine 173 is the MATH domain. In terms of domain architecture, BTB spans serine 232–tyrosine 293.

As to quaternary structure, interacts with cul-3.

Its pathway is protein modification; protein ubiquitination. Its function is as follows. Probable substrate-specific adapter of an E3 ubiquitin-protein ligase complex which mediates the ubiquitination and subsequent proteasomal degradation of target proteins. The protein is BTB and MATH domain-containing protein 41 (bath-41) of Caenorhabditis elegans.